Reading from the N-terminus, the 328-residue chain is 4-hydroxythreonine-4-phosphate dehydrogenase (328 aa).

Positions 134 and 135 each coordinate substrate. 3 residues coordinate a divalent metal cation: histidine 164, histidine 209, and histidine 265. The substrate site is built by lysine 273, asparagine 282, and arginine 291.

Belongs to the PdxA family. As to quaternary structure, homodimer. The cofactor is Zn(2+). Mg(2+) serves as cofactor. It depends on Co(2+) as a cofactor.

It is found in the cytoplasm. The enzyme catalyses 4-(phosphooxy)-L-threonine + NAD(+) = 3-amino-2-oxopropyl phosphate + CO2 + NADH. The protein operates within cofactor biosynthesis; pyridoxine 5'-phosphate biosynthesis; pyridoxine 5'-phosphate from D-erythrose 4-phosphate: step 4/5. Catalyzes the NAD(P)-dependent oxidation of 4-(phosphooxy)-L-threonine (HTP) into 2-amino-3-oxo-4-(phosphooxy)butyric acid which spontaneously decarboxylates to form 3-amino-2-oxopropyl phosphate (AHAP). This chain is 4-hydroxythreonine-4-phosphate dehydrogenase, found in Vibrio vulnificus (strain YJ016).